Here is a 183-residue protein sequence, read N- to C-terminus: Mitochondrial inner membrane protease subunit 2 (183 aa).

The chain crosses the membrane as a helical span at residues 13–35 (AFVSGFFVAVPVTVTVLDRLAYV). Residues S42 and K90 contribute to the active site. Positions 161–183 (SVPPDRRPLLNWDRAAEDKYDDD) are disordered. Basic and acidic residues predominate over residues 164-183 (PDRRPLLNWDRAAEDKYDDD).

This sequence belongs to the peptidase S26 family. IMP2 subfamily. Heterodimer of 2 subunits, IMMPL1 and IMMPL2.

It localises to the mitochondrion inner membrane. In terms of biological role, catalyzes the removal of transit peptides required for the targeting of proteins from the mitochondrial matrix, across the inner membrane, into the inter-membrane space. This is Mitochondrial inner membrane protease subunit 2 (immp2l) from Danio rerio (Zebrafish).